A 467-amino-acid chain; its full sequence is Uronate isomerase (467 aa).

The protein belongs to the metallo-dependent hydrolases superfamily. Uronate isomerase family.

The enzyme catalyses D-glucuronate = D-fructuronate. It catalyses the reaction aldehydo-D-galacturonate = keto-D-tagaturonate. It participates in carbohydrate metabolism; pentose and glucuronate interconversion. This chain is Uronate isomerase, found in Clostridium acetobutylicum (strain ATCC 824 / DSM 792 / JCM 1419 / IAM 19013 / LMG 5710 / NBRC 13948 / NRRL B-527 / VKM B-1787 / 2291 / W).